Consider the following 285-residue polypeptide: Aquaporin PIP2-5 (285 aa).

2 helical membrane-spanning segments follow: residues 38-58 (AVIA…ATVI) and 75-95 (CGGV…FILV). The NPA 1 signature appears at 107-109 (NPA). Helical transmembrane passes span 126–146 (LLYI…VKGF), 168–188 (GTGL…VFSA), and 202–222 (VLAP…TIPI). The NPA 2 motif lies at 228–230 (NPA). Residues 250-270 (IFWVGPFIGAAIAAAYHQYVL) form a helical membrane-spanning segment.

It belongs to the MIP/aquaporin (TC 1.A.8) family. PIP (TC 1.A.8.11) subfamily. In terms of assembly, homomers. May interact with PIP1-2 to form heteromers. As to expression, specifically expressed in roots, in the exodermis, endodermis and xylem parenchyma. Polar localization to the external periclinal side of epidermal cells in root apices.

It localises to the cell membrane. Functionally, water channel required to facilitate the transport of water across cell membrane. Its function is impaired by Hg(2+). May play a role in water uptake from the root surface. Active as homomers. Increased activity when heteromerization with PIP1-2. This is Aquaporin PIP2-5 (PIP2-5) from Zea mays (Maize).